The following is a 245-amino-acid chain: tRNA pseudouridine synthase A 2 (245 aa).

The active-site Nucleophile is Asp-53. Tyr-111 is a binding site for substrate.

This sequence belongs to the tRNA pseudouridine synthase TruA family. As to quaternary structure, homodimer.

The enzyme catalyses uridine(38/39/40) in tRNA = pseudouridine(38/39/40) in tRNA. Its function is as follows. Formation of pseudouridine at positions 38, 39 and 40 in the anticodon stem and loop of transfer RNAs. The protein is tRNA pseudouridine synthase A 2 of Bacillus cereus (strain ATCC 14579 / DSM 31 / CCUG 7414 / JCM 2152 / NBRC 15305 / NCIMB 9373 / NCTC 2599 / NRRL B-3711).